Here is a 326-residue protein sequence, read N- to C-terminus: MKPSIVLYKSIPADLHQRLEQHFTVNSFEGLSSDNQPELLSALQQAEGLIGSGGKIDQAFLERAPKLRAASTISVGYDNFDVDALSQRGIALMHTPTVLTETVADTMMALVLSSARRVVELAERVKAGEWQDSIGDDWFGVDVHHKTIGILGMGRIGMALAQRAHFGFSMPVLYTSRRPHEAAEKRFGARRCSLDTLLAEVDFLCITLPMTEQTYHMIGPEQLAKMKSSAILINAGRGPVVDEQALIAALQDGTIHAAGLDVFAQEPLPVESPLLKLPNVVAVPHIGSATHETRYNMAACAVDNLIAALTGTVTENCVNPQVLQQA.

Active-site residues include R237 and E266. H285 functions as the Proton donor in the catalytic mechanism.

This sequence belongs to the D-isomer specific 2-hydroxyacid dehydrogenase family. GhrB subfamily. As to quaternary structure, homodimer.

Its subcellular location is the cytoplasm. The enzyme catalyses glycolate + NADP(+) = glyoxylate + NADPH + H(+). It carries out the reaction (R)-glycerate + NAD(+) = 3-hydroxypyruvate + NADH + H(+). It catalyses the reaction (R)-glycerate + NADP(+) = 3-hydroxypyruvate + NADPH + H(+). Its function is as follows. Catalyzes the NADPH-dependent reduction of glyoxylate and hydroxypyruvate into glycolate and glycerate, respectively. This is Glyoxylate/hydroxypyruvate reductase B from Yersinia enterocolitica serotype O:8 / biotype 1B (strain NCTC 13174 / 8081).